The chain runs to 159 residues: 2-C-methyl-D-erythritol 2,4-cyclodiphosphate synthase (159 aa).

Residues Asp8 and His10 each coordinate a divalent metal cation. 4-CDP-2-C-methyl-D-erythritol 2-phosphate-binding positions include 8–10 (DVH) and 34–35 (HS). His42 is a binding site for a divalent metal cation. 4-CDP-2-C-methyl-D-erythritol 2-phosphate is bound by residues 56 to 58 (DIG), 61 to 65 (FPDTD), 100 to 106 (AQAPKML), 132 to 135 (TTTE), Phe139, and Arg142.

This sequence belongs to the IspF family. As to quaternary structure, homotrimer. The cofactor is a divalent metal cation.

The enzyme catalyses 4-CDP-2-C-methyl-D-erythritol 2-phosphate = 2-C-methyl-D-erythritol 2,4-cyclic diphosphate + CMP. The protein operates within isoprenoid biosynthesis; isopentenyl diphosphate biosynthesis via DXP pathway; isopentenyl diphosphate from 1-deoxy-D-xylulose 5-phosphate: step 4/6. In terms of biological role, involved in the biosynthesis of isopentenyl diphosphate (IPP) and dimethylallyl diphosphate (DMAPP), two major building blocks of isoprenoid compounds. Catalyzes the conversion of 4-diphosphocytidyl-2-C-methyl-D-erythritol 2-phosphate (CDP-ME2P) to 2-C-methyl-D-erythritol 2,4-cyclodiphosphate (ME-CPP) with a corresponding release of cytidine 5-monophosphate (CMP). The sequence is that of 2-C-methyl-D-erythritol 2,4-cyclodiphosphate synthase from Salmonella typhimurium (strain LT2 / SGSC1412 / ATCC 700720).